The primary structure comprises 303 residues: Elongation factor Ts (303 aa).

Positions 81–84 are involved in Mg(2+) ion dislocation from EF-Tu; that stretch reads TDFV.

This sequence belongs to the EF-Ts family.

It localises to the cytoplasm. Associates with the EF-Tu.GDP complex and induces the exchange of GDP to GTP. It remains bound to the aminoacyl-tRNA.EF-Tu.GTP complex up to the GTP hydrolysis stage on the ribosome. This Mesomycoplasma hyopneumoniae (strain 232) (Mycoplasma hyopneumoniae) protein is Elongation factor Ts.